A 107-amino-acid chain; its full sequence is Iron-binding protein IscA (107 aa).

Fe cation is bound by residues cysteine 35, cysteine 99, and cysteine 101.

Belongs to the HesB/IscA family. As to quaternary structure, homodimer; may form tetramers and higher multimers. The cofactor is Fe cation.

Functionally, is able to transfer iron-sulfur clusters to apo-ferredoxin. Multiple cycles of [2Fe2S] cluster formation and transfer are observed, suggesting that IscA acts catalytically. Recruits intracellular free iron so as to provide iron for the assembly of transient iron-sulfur cluster in IscU in the presence of IscS, L-cysteine and the thioredoxin reductase system TrxA/TrxB. The protein is Iron-binding protein IscA of Pectobacterium atrosepticum (strain SCRI 1043 / ATCC BAA-672) (Erwinia carotovora subsp. atroseptica).